Consider the following 388-residue polypeptide: Formate-dependent phosphoribosylglycinamide formyltransferase (388 aa).

N(1)-(5-phospho-beta-D-ribosyl)glycinamide contacts are provided by residues 20–21 (EL) and E80. Residues R112, K153, 158-163 (SSGKGQ), 193-196 (EEFI), and E201 contribute to the ATP site. The ATP-grasp domain occupies 117 to 306 (RLAFEKLGLR…EFEIHARAIL (190 aa)). 2 residues coordinate Mg(2+): E265 and E277. Residues D284, K352, and 359–360 (RR) each bind N(1)-(5-phospho-beta-D-ribosyl)glycinamide.

This sequence belongs to the PurK/PurT family. Homodimer.

It catalyses the reaction N(1)-(5-phospho-beta-D-ribosyl)glycinamide + formate + ATP = N(2)-formyl-N(1)-(5-phospho-beta-D-ribosyl)glycinamide + ADP + phosphate + H(+). Its pathway is purine metabolism; IMP biosynthesis via de novo pathway; N(2)-formyl-N(1)-(5-phospho-D-ribosyl)glycinamide from N(1)-(5-phospho-D-ribosyl)glycinamide (formate route): step 1/1. Involved in the de novo purine biosynthesis. Catalyzes the transfer of formate to 5-phospho-ribosyl-glycinamide (GAR), producing 5-phospho-ribosyl-N-formylglycinamide (FGAR). Formate is provided by PurU via hydrolysis of 10-formyl-tetrahydrofolate. The chain is Formate-dependent phosphoribosylglycinamide formyltransferase from Methanococcus maripaludis (strain C5 / ATCC BAA-1333).